A 262-amino-acid polypeptide reads, in one-letter code: MSITIRTLQKRKQDGGKFSVLTAYDACFSRLISEAGVEAILVGDSLGNVIQGQTSTVPVTLEQMVYHTQCVARGNQGSLIIADIPFMGAATLERTLNAATALMQAGANMVKLEGSAWLAEAIEVLNRNGVPVCAHMGLTPQAVNSLGGYRVQGKDDDGAAELLNAAKILDQAGTALFVLECVPRALSAEITREVAAPVIGIGAAPECDGQVLVMHDMLGISPGKPARFVRNFMAETGDMRAAFKAYDDAVKDGSFPADEHCF.

Mg(2+) is bound by residues Asp44 and Asp83. 3-methyl-2-oxobutanoate contacts are provided by residues 44 to 45 (DS), Asp83, and Lys111. Glu113 lines the Mg(2+) pocket. Glu180 acts as the Proton acceptor in catalysis.

The protein belongs to the PanB family. Homodecamer; pentamer of dimers. Requires Mg(2+) as cofactor.

It localises to the cytoplasm. It carries out the reaction 3-methyl-2-oxobutanoate + (6R)-5,10-methylene-5,6,7,8-tetrahydrofolate + H2O = 2-dehydropantoate + (6S)-5,6,7,8-tetrahydrofolate. It functions in the pathway cofactor biosynthesis; (R)-pantothenate biosynthesis; (R)-pantoate from 3-methyl-2-oxobutanoate: step 1/2. Catalyzes the reversible reaction in which hydroxymethyl group from 5,10-methylenetetrahydrofolate is transferred onto alpha-ketoisovalerate to form ketopantoate. This Alcanivorax borkumensis (strain ATCC 700651 / DSM 11573 / NCIMB 13689 / SK2) protein is 3-methyl-2-oxobutanoate hydroxymethyltransferase.